The primary structure comprises 394 residues: MNKKSIRDVELAGKRVFCRVDFNVPMQDGVITDDTRIRAAVPTIRFMMEAGAKVILASHFGRPKGQVVEEMRLTPVAAHLSSLLGKDVRKLEDCQGADVEAAVERMESGDVILLENVRFHAGEEKNDPELAKSFAALADLFVNDAFGTAHRAHASTAGIAEYIPAVAGLLMEKEIRFMGGALSNPERPFTAIVGGAKVKDKIAVIENLLTKVDHLIIGGGMANTFLKAQGYGIGASLCEDDKLDLARTLMEQAKERGVQLLMPVDVVVADRFAADAEKQVVAIDAIPEGWMALDIGPKTVEQYHSVIVDSKTVVWNGPMGVFEMDAFAGGTIGVAKAMAACSGTTIIGGGDSVAAVEKAGVAEQMTHISTGGGASLEFMEGKELPGVAVLADNQ.

Substrate-binding positions include aspartate 21–asparagine 23, arginine 36, histidine 59–arginine 62, arginine 118, and arginine 151. ATP-binding positions include lysine 201, glutamate 323, and glycine 349–serine 352.

This sequence belongs to the phosphoglycerate kinase family. Monomer.

The protein resides in the cytoplasm. The enzyme catalyses (2R)-3-phosphoglycerate + ATP = (2R)-3-phospho-glyceroyl phosphate + ADP. It functions in the pathway carbohydrate degradation; glycolysis; pyruvate from D-glyceraldehyde 3-phosphate: step 2/5. The protein is Phosphoglycerate kinase of Brevibacillus brevis (strain 47 / JCM 6285 / NBRC 100599).